We begin with the raw amino-acid sequence, 174 residues long: uncharacterized protein (174 aa).

Residues 1–31 form the signal peptide; the sequence is MCCVYRMNRPASGLTVVFCGKLSGKPGPKSA. Positions 39–59 are disordered; it reads KSGADDGGENPRFFSAGPRTE.

This is an uncharacterized protein from Escherichia coli (strain K12).